The following is a 739-amino-acid chain: tRNA 5-methylaminomethyl-2-thiouridine biosynthesis bifunctional protein MnmC (739 aa).

Residues 1–282 (MDKVTPAKLS…KREMLTATKL (282 aa)) form a tRNA (mnm(5)s(2)U34)-methyltransferase region. The segment at 330 to 739 (IGAGVCGLMA…HRSSLKKPLS (410 aa)) is FAD-dependent cmnm(5)s(2)U34 oxidoreductase.

It in the N-terminal section; belongs to the methyltransferase superfamily. tRNA (mnm(5)s(2)U34)-methyltransferase family. In the C-terminal section; belongs to the DAO family. The cofactor is FAD.

The protein localises to the cytoplasm. It carries out the reaction 5-aminomethyl-2-thiouridine(34) in tRNA + S-adenosyl-L-methionine = 5-methylaminomethyl-2-thiouridine(34) in tRNA + S-adenosyl-L-homocysteine + H(+). Catalyzes the last two steps in the biosynthesis of 5-methylaminomethyl-2-thiouridine (mnm(5)s(2)U) at the wobble position (U34) in tRNA. Catalyzes the FAD-dependent demodification of cmnm(5)s(2)U34 to nm(5)s(2)U34, followed by the transfer of a methyl group from S-adenosyl-L-methionine to nm(5)s(2)U34, to form mnm(5)s(2)U34. This is tRNA 5-methylaminomethyl-2-thiouridine biosynthesis bifunctional protein MnmC from Psychrobacter sp. (strain PRwf-1).